The primary structure comprises 1188 residues: AT-rich interactive domain-containing protein 5B (1188 aa).

Lys130 is covalently cross-linked (Glycyl lysine isopeptide (Lys-Gly) (interchain with G-Cter in SUMO2)). A disordered region spans residues 251–277 (RPRKKKPCPQRRDSFSGVKDSNNNSDG). Position 264 is a phosphoserine (Ser264). Positions 318-410 (RADEQAFLVA…LILPYERFIK (93 aa)) constitute an ARID domain. Position 336 is an N6,N6-dimethyllysine (Lys336). Residues 412–611 (EEDKPLPPIK…QPPLANQNET (200 aa)) are disordered. A Glycyl lysine isopeptide (Lys-Gly) (interchain with G-Cter in SUMO2) cross-link involves residue Lys445. Residues 446-458 (HEIPKSKKEKENA) show a composition bias toward basic and acidic residues. Residues Lys494 and Lys496 each participate in a glycyl lysine isopeptide (Lys-Gly) (interchain with G-Cter in SUMO2) cross-link. Residues 597-609 (SFPTTQPPLANQN) show a composition bias toward polar residues. Glycyl lysine isopeptide (Lys-Gly) (interchain with G-Cter in SUMO2) cross-links involve residues Lys767, Lys774, Lys803, and Lys810. Disordered stretches follow at residues 846–874 (HHLHNEQTSKYPSRDMYRESENSSFPSHR) and 891–918 (DKKSAAAEAPTDDQPTDLSLPKNPHKPT). Residues 847-866 (HLHNEQTSKYPSRDMYRESE) are compositionally biased toward basic and acidic residues. Residues Lys893, Lys916, Lys920, and Lys935 each participate in a glycyl lysine isopeptide (Lys-Gly) (interchain with G-Cter in SUMO2) cross-link. The disordered stretch occupies residues 956–978 (RVSPMTMSGPKKYPESLSRSGKP). Residues Lys988, Lys1000, and Lys1013 each participate in a glycyl lysine isopeptide (Lys-Gly) (interchain with G-Cter in SUMO2) cross-link. Residues 1028–1070 (ARAVSPLDPSKEVSGKEKASEQESEGSKAAHGGHSGGGSEGHK) form a disordered region. A Phosphoserine modification is found at Ser1032. Residues 1036-1055 (PSKEVSGKEKASEQESEGSK) are compositionally biased toward basic and acidic residues. Residues Lys1055 and Lys1070 each participate in a glycyl lysine isopeptide (Lys-Gly) (interchain with G-Cter in SUMO2) cross-link. Position 1133 is a phosphoserine (Ser1133).

The protein belongs to the ARID5B family. Post-translationally, methylation at Lys-336 prevents DNA-binding. Demethylation by PHF2 promotes recruitment of the PHF2-ARID5B complex to promoters. As to expression, widely expressed, including in liver (at protein level).

Its subcellular location is the nucleus. Its function is as follows. Transcription coactivator that binds to the 5'-AATA[CT]-3' core sequence and plays a key role in adipogenesis and liver development. Acts by forming a complex with phosphorylated PHF2, which mediates demethylation at Lys-336, leading to target the PHF2-ARID5B complex to target promoters, where PHF2 mediates demethylation of dimethylated 'Lys-9' of histone H3 (H3K9me2), followed by transcription activation of target genes. The PHF2-ARID5B complex acts as a coactivator of HNF4A in liver. Required for adipogenesis: regulates triglyceride metabolism in adipocytes by regulating expression of adipogenic genes. Overexpression leads to induction of smooth muscle marker genes, suggesting that it may also act as a regulator of smooth muscle cell differentiation and proliferation. Represses the cytomegalovirus enhancer. The sequence is that of AT-rich interactive domain-containing protein 5B (ARID5B) from Homo sapiens (Human).